Here is a 1099-residue protein sequence, read N- to C-terminus: ATP-dependent helicase/deoxyribonuclease subunit B (1099 aa).

[4Fe-4S] cluster-binding residues include C766, C1056, C1059, and C1065.

This sequence belongs to the helicase family. AddB/RexB type 2 subfamily. In terms of assembly, heterodimer of AddA and RexB. The cofactor is Mg(2+). [4Fe-4S] cluster is required as a cofactor.

In terms of biological role, the heterodimer acts as both an ATP-dependent DNA helicase and an ATP-dependent, dual-direction single-stranded exonuclease. Recognizes the chi site generating a DNA molecule suitable for the initiation of homologous recombination. This subunit has 5' -&gt; 3' nuclease activity but not helicase activity. The chain is ATP-dependent helicase/deoxyribonuclease subunit B from Lactococcus lactis subsp. lactis (strain IL1403) (Streptococcus lactis).